Reading from the N-terminus, the 728-residue chain is Fibulin-1 (728 aa).

A signal peptide spans methionine 1–alanine 17. 30 disulfide bridges follow: cysteine 23–cysteine 49, cysteine 24–cysteine 56, cysteine 37–cysteine 57, cysteine 66–cysteine 94, cysteine 79–cysteine 95, cysteine 97–cysteine 121, cysteine 98–cysteine 128, cysteine 111–cysteine 129, cysteine 159–cysteine 168, cysteine 164–cysteine 178, cysteine 180–cysteine 279, cysteine 285–cysteine 298, cysteine 292–cysteine 307, cysteine 347–cysteine 359, cysteine 353–cysteine 368, cysteine 375–cysteine 388, cysteine 394–cysteine 404, cysteine 399–cysteine 413, cysteine 415–cysteine 428, cysteine 434–cysteine 448, cysteine 442–cysteine 457, cysteine 459–cysteine 472, cysteine 478–cysteine 489, cysteine 485–cysteine 498, cysteine 500–cysteine 513, cysteine 519–cysteine 534, cysteine 530–cysteine 543, cysteine 545–cysteine 558, cysteine 564–cysteine 576, and cysteine 569–cysteine 585. Anaphylatoxin-like domains follow at residues cysteine 23–asparagine 64, alanine 65–aspartate 96, and cysteine 97–cysteine 129. Residues leucine 155–valine 194 form the EGF-like 1 domain. The region spanning aspartate 195–valine 280 is the EGF-like 2; calcium-binding domain. Positions aspartate 281 to isoleucine 344 constitute an EGF-like 3; calcium-binding domain. Residues aspartate 343 to glutamate 389 enclose the EGF-like 4; calcium-binding domain. An EGF-like 5; calcium-binding domain is found at aspartate 390–glutamate 429. In terms of domain architecture, EGF-like 6; calcium-binding spans aspartate 430–glutamate 473. The region spanning aspartate 474 to glutamate 514 is the EGF-like 7; calcium-binding domain. An EGF-like 8; calcium-binding domain is found at aspartate 515–valine 559. An EGF-like 9; calcium-binding domain is found at aspartate 560–cysteine 610. An N-linked (GlcNAc...) asparagine glycan is attached at asparagine 624.

The protein belongs to the fibulin family. Homomultimerizes and interacts with various extracellular matrix components. Expressed in head muscle cells, anterior and posterior intestinal cells. Isoform a: Expressed in male and hermaphrodite gonad, anterior and posterior intestine and pharyngeal basement membranes, body-wall muscle, GLR cells, uterine attachment and mechanosensory neurons. Isoform c: Expressed on ALM/PLM mechanosensory neuron attachments, in flexible tracks connecting the pharyngeal, body-wall-muscle basement membranes and in uterine attachments.

Its subcellular location is the secreted. The protein localises to the extracellular space. It is found in the extracellular matrix. It localises to the basement membrane. Functionally, incorporated into fibronectin-containing matrix fibers. Plays a role in cell adhesion and migration along protein fibers within the extracellular matrix (ECM). Important for certain developmental processes and contributes to the supramolecular organization of ECM architecture, in particular to those of basement membranes. In terms of biological role, involved in regulating the shape and adhesion of cells in the developing pharynx, intestine, body-wall muscle and gonadal tissue. During gonadogenesis, regulates the width of gonads and the migration of distal tip cells (DTC). Together with type IV collagen let-2 and downstream of metalloprotease mig-17, recruits nidogen nid-1 to the gonad basement membrane thereby inducing basement membrane remodeling required for the directional migration of DTCs. Acts antagonistically with metalloprotease gon-1 to maintain optimal levels of type IV collagen emb-9 in the gonad basement membrane during gonadogenesis. Required for larval development. Its function is as follows. Involved in the assembly of the flexible hemicentin-containing tracks found joining the pharynx and body-wall-muscle basement membranes. In Caenorhabditis elegans, this protein is Fibulin-1 (fbl-1).